We begin with the raw amino-acid sequence, 82 residues long: NAD(P)H-quinone oxidoreductase subunit O, organellar chromatophore (82 aa).

This sequence belongs to the complex I NdhO subunit family. NDH-1 can be composed of about 15 different subunits; different subcomplexes with different compositions have been identified which probably have different functions.

Its subcellular location is the plastid. It is found in the organellar chromatophore thylakoid membrane. It catalyses the reaction a plastoquinone + NADH + (n+1) H(+)(in) = a plastoquinol + NAD(+) + n H(+)(out). It carries out the reaction a plastoquinone + NADPH + (n+1) H(+)(in) = a plastoquinol + NADP(+) + n H(+)(out). Functionally, NDH-1 shuttles electrons from an unknown electron donor, via FMN and iron-sulfur (Fe-S) centers, to quinones in the respiratory and/or the photosynthetic chain. The immediate electron acceptor for the enzyme in this species is believed to be plastoquinone. Couples the redox reaction to proton translocation, and thus conserves the redox energy in a proton gradient. Cyanobacterial NDH-1 also plays a role in inorganic carbon-concentration. The protein is NAD(P)H-quinone oxidoreductase subunit O, organellar chromatophore of Paulinella chromatophora.